A 337-amino-acid chain; its full sequence is Angiopoietin-related protein 7 (337 aa).

A signal peptide spans 1–21; it reads MLRETWLCVILVAFVSHPVWL. Positions 30–110 form a coiled coil; sequence QLKAAGCCEE…DIMQLQAAQT (81 aa). Residue N49 is glycosylated (N-linked (GlcNAc...) asparagine). Positions 113 to 334 constitute a Fibrinogen C-terminal domain; that stretch reads QTSADAIYDC…RVEMKIRPEA (222 aa). Residues C122 and C153 are joined by a disulfide bond. 2 N-linked (GlcNAc...) asparagine glycosylation sites follow: N244 and N258. C276 and C289 are oxidised to a cystine. An N-linked (GlcNAc...) asparagine glycan is attached at N320.

In terms of assembly, homotetramer; disulfide-linked.

Its subcellular location is the secreted. Functionally, has a role in the formation and organization of the extracellular matrix. In the eye, it functions as a mediator of dexamethasone-induced matrix deposition in the trabecular meshwork, the tissue responsible for the outflow of the ocular aqueous humor and for the maintenance of intraocular pressure. Is a negative regulator of angiogenesis in the cornea, and plays a major role in maintaining corneal avascularity and transparency. The protein is Angiopoietin-related protein 7 (Angptl7) of Mus musculus (Mouse).